We begin with the raw amino-acid sequence, 116 residues long: Large ribosomal subunit protein bL19 (116 aa).

Belongs to the bacterial ribosomal protein bL19 family.

Functionally, this protein is located at the 30S-50S ribosomal subunit interface and may play a role in the structure and function of the aminoacyl-tRNA binding site. The protein is Large ribosomal subunit protein bL19 of Ectopseudomonas mendocina (strain ymp) (Pseudomonas mendocina).